We begin with the raw amino-acid sequence, 119 residues long: Small ribosomal subunit protein bS16 (119 aa).

A compositionally biased stretch (basic residues) spans 96-107 (RKKRRAYRQRRS). Positions 96 to 119 (RKKRRAYRQRRSTQREEAAKDATK) are disordered. The segment covering 108 to 119 (TQREEAAKDATK) has biased composition (basic and acidic residues).

The protein belongs to the bacterial ribosomal protein bS16 family.

This is Small ribosomal subunit protein bS16 from Chlamydia pneumoniae (Chlamydophila pneumoniae).